Consider the following 238-residue polypeptide: Ribonuclease PH (238 aa).

Residues R87 and 125 to 127 contribute to the phosphate site; that span reads GTR.

This sequence belongs to the RNase PH family. As to quaternary structure, homohexameric ring arranged as a trimer of dimers.

It catalyses the reaction tRNA(n+1) + phosphate = tRNA(n) + a ribonucleoside 5'-diphosphate. Its function is as follows. Phosphorolytic 3'-5' exoribonuclease that plays an important role in tRNA 3'-end maturation. Removes nucleotide residues following the 3'-CCA terminus of tRNAs; can also add nucleotides to the ends of RNA molecules by using nucleoside diphosphates as substrates, but this may not be physiologically important. Probably plays a role in initiation of 16S rRNA degradation (leading to ribosome degradation) during starvation. The polypeptide is Ribonuclease PH (Synechococcus elongatus (strain ATCC 33912 / PCC 7942 / FACHB-805) (Anacystis nidulans R2)).